A 301-amino-acid chain; its full sequence is Probable alpha-L-glutamate ligase (301 aa).

Positions 104–287 constitute an ATP-grasp domain; the sequence is LQLLSRRGIG…VAGMIIEHLE (184 aa). ATP-binding positions include K141, 178–179, D187, and 211–213; these read EY and RSN. 3 residues coordinate Mg(2+): D248, E260, and N262. The Mn(2+) site is built by D248, E260, and N262.

This sequence belongs to the RimK family. Mg(2+) serves as cofactor. The cofactor is Mn(2+).

This Pseudomonas putida (strain ATCC 700007 / DSM 6899 / JCM 31910 / BCRC 17059 / LMG 24140 / F1) protein is Probable alpha-L-glutamate ligase.